The following is a 660-amino-acid chain: tRNA 5-methylaminomethyl-2-thiouridine biosynthesis bifunctional protein MnmC (660 aa).

The interval 1-242 (MTDRIVPATL…KRAMLVGEFA (242 aa)) is tRNA (mnm(5)s(2)U34)-methyltransferase. The interval 266-660 (IGAGLAGCAV…VRALRHGRVA (395 aa)) is FAD-dependent cmnm(5)s(2)U34 oxidoreductase.

The protein in the N-terminal section; belongs to the methyltransferase superfamily. tRNA (mnm(5)s(2)U34)-methyltransferase family. In the C-terminal section; belongs to the DAO family. The cofactor is FAD.

It is found in the cytoplasm. The enzyme catalyses 5-aminomethyl-2-thiouridine(34) in tRNA + S-adenosyl-L-methionine = 5-methylaminomethyl-2-thiouridine(34) in tRNA + S-adenosyl-L-homocysteine + H(+). Functionally, catalyzes the last two steps in the biosynthesis of 5-methylaminomethyl-2-thiouridine (mnm(5)s(2)U) at the wobble position (U34) in tRNA. Catalyzes the FAD-dependent demodification of cmnm(5)s(2)U34 to nm(5)s(2)U34, followed by the transfer of a methyl group from S-adenosyl-L-methionine to nm(5)s(2)U34, to form mnm(5)s(2)U34. In Burkholderia pseudomallei (strain 1106a), this protein is tRNA 5-methylaminomethyl-2-thiouridine biosynthesis bifunctional protein MnmC.